We begin with the raw amino-acid sequence, 208 residues long: 3-demethoxyubiquinol 3-hydroxylase (208 aa).

Positions 57, 87, 90, 139, 171, and 174 each coordinate Fe cation.

It belongs to the COQ7 family. Requires Fe cation as cofactor.

The protein resides in the cell membrane. It catalyses the reaction a 5-methoxy-2-methyl-3-(all-trans-polyprenyl)benzene-1,4-diol + AH2 + O2 = a 3-demethylubiquinol + A + H2O. It participates in cofactor biosynthesis; ubiquinone biosynthesis. Its function is as follows. Catalyzes the hydroxylation of 2-nonaprenyl-3-methyl-6-methoxy-1,4-benzoquinol during ubiquinone biosynthesis. This chain is 3-demethoxyubiquinol 3-hydroxylase, found in Nitrosomonas europaea (strain ATCC 19718 / CIP 103999 / KCTC 2705 / NBRC 14298).